Consider the following 146-residue polypeptide: Ataxin-7-like protein 1 (146 aa).

Disordered stretches follow at residues 1 to 27 (MTSE…QEGT) and 125 to 146 (KRNA…QRQV). Residues 127–138 (NASISWSGAESR) are compositionally biased toward polar residues.

This Mus musculus (Mouse) protein is Ataxin-7-like protein 1 (Atxn7l1).